A 441-amino-acid polypeptide reads, in one-letter code: Hexane cyclase gkaB (441 aa).

An N-terminal signal peptide occupies residues 1–25; it reads MTKFLAGAAIVLAVAFGSFFSQSST. Residues Asn77, Asn153, Asn184, and Asn308 are each glycosylated (N-linked (GlcNAc...) asparagine).

The protein belongs to the Diels-Alderase family.

The protein operates within mycotoxin biosynthesis. In terms of biological role, hexane cyclase; part of the gene cluster that mediates the biosynthesis of GKK1032, fungal natural products containing a macrocyclic para-cyclophane connected to a decahydrofluorene ring system that show potent antitumor activities. Within the pathway, gkaB functions synergistically with gkaX and gkaZ to form the cyclophane. The pathway begins with the PKS-NRPS gkaA which, with the help of the trans-enoyl reductase gkaC, synthesizes the polyketide-tyrosyl acyl thioester product which can be reductively off-loaded by the terminal reductase (R) domain in gkaA. The alpha/beta hydrolase gkaG is then required to catalyze the subsequent Knoevenagel condensation that affords the 3-pyrrolin-2-one ring, whereas the three proteins gkaB, gkaX and gkaZ then function synergistically to form the cyclophane. This chain is Hexane cyclase gkaB, found in Penicillium citrinum.